A 206-amino-acid chain; its full sequence is MGEHWALGPEAGSSLLLCSALLAVGCALGLRLGRGRSAVERWVLAWLCYDSLVHFVLEGAFVYLSIVGNVADSQGLIASLWKEYGKADTRWLYSDPTVVSLEILTVVLDGLLALVLIYAIVKEKYYRHFVQIVLCVCELYGCWMTFFPEWLVGSPSLNTSSWLYLWVYLVFFNGLWVLIPGLLLWQSWVELKKRDSQEANLAKKHK.

A run of 4 helical transmembrane segments spans residues 10–30 (EAGSSLLLCSALLAVGCALGL), 42–62 (WVLAWLCYDSLVHFVLEGAFV), 101–121 (LEILTVVLDGLLALVLIYAIV), and 165–185 (LWVYLVFFNGLWVLIPGLLLW). Positions 39–184 (VERWVLAWLC…LWVLIPGLLL (146 aa)) constitute an EXPERA domain.

It belongs to the EBP family. Homodimer.

It localises to the endoplasmic reticulum membrane. In terms of biological role, does not possess sterol isomerase activity and does not bind sigma ligands. This Mus musculus (Mouse) protein is Emopamil-binding protein-like (Ebpl).